Consider the following 697-residue polypeptide: Elongation factor G (697 aa).

The region spanning 8–290 (ERYRNIGISA…AVLDFLPSPV (283 aa)) is the tr-type G domain. Residues 17–24 (AHIDAGKT), 88–92 (DTPGH), and 142–145 (NKMD) each bind GTP.

Belongs to the TRAFAC class translation factor GTPase superfamily. Classic translation factor GTPase family. EF-G/EF-2 subfamily.

It is found in the cytoplasm. Functionally, catalyzes the GTP-dependent ribosomal translocation step during translation elongation. During this step, the ribosome changes from the pre-translocational (PRE) to the post-translocational (POST) state as the newly formed A-site-bound peptidyl-tRNA and P-site-bound deacylated tRNA move to the P and E sites, respectively. Catalyzes the coordinated movement of the two tRNA molecules, the mRNA and conformational changes in the ribosome. This chain is Elongation factor G, found in Methylobacillus flagellatus (strain ATCC 51484 / DSM 6875 / VKM B-1610 / KT).